A 145-amino-acid polypeptide reads, in one-letter code: MAGGEPQSLEEAFAARRNVLAARRARERLRRLIASKSRHRFLRYLSWRFWKFERRDYWRKPKGNDNKMRLQLKGYPPIVKVGYRTPKAIRGMHPSGLEPVIVSSAKDLERLSPERHIVYIASGVGLRKKQEIRRAALERGFRVAN.

Belongs to the eukaryotic ribosomal protein eL32 family.

This Aeropyrum pernix (strain ATCC 700893 / DSM 11879 / JCM 9820 / NBRC 100138 / K1) protein is Large ribosomal subunit protein eL32 (rpl32e).